A 451-amino-acid polypeptide reads, in one-letter code: Tubulin gamma-2 chain (451 aa).

At S131 the chain carries Phosphoserine; by BRSK1. 142 to 148 contributes to the GTP binding site; the sequence is AGGTGSG.

This sequence belongs to the tubulin family. In terms of assembly, component of the gamma-tubulin ring complex (gTuRC) consisting of TUBGCP2, TUBGCP3, TUBGCP4, TUBGCP5 and TUBGCP6 and gamma-tubulin TUBG1 or TUBG2. TUBGCP2, TUBGCP3, TUBGCP4, TUBGCP5 and TUBGCP6 assemble in a 5:5:2:1:1 stoichiometry; each is associated with a gamma-tubulin, thereby arranging 14 gamma-tubulins in a helical manner. Gamma-tubulin at the first position is blocked by TUBGCP3 at the last position, allowing 13 protafilaments to grow into a microtubule. Interacts with alpha-beta tubulin heterodimers; the interaction allows microtubules to nucleate from the gTuRC. In terms of processing, phosphorylation at Ser-131 by BRSK1 regulates centrosome duplication, possibly by mediating relocation of gamma-tubulin and its associated proteins from the cytoplasm to the centrosome.

The protein resides in the cytoplasm. The protein localises to the cytoskeleton. Its subcellular location is the microtubule organizing center. It localises to the centrosome. Functionally, tubulin is the major constituent of microtubules, protein filaments consisting of alpha- and beta-tubulin heterodimers. Gamma-tubulin is a key component of the gamma-tubulin ring complex (gTuRC) which mediates microtubule nucleation. The gTuRC regulates the minus-end nucleation of alpha-beta tubulin heterodimers that grow into microtubule protafilaments, a critical step in centrosome duplication and spindle formation. This is Tubulin gamma-2 chain (TUBG2) from Bos taurus (Bovine).